The primary structure comprises 279 residues: Nitrate import permease protein NrtB (279 aa).

The next 5 helical transmembrane spans lie at 25 to 45, 91 to 111, 149 to 169, 200 to 220, and 249 to 269; these read FLPYVVCLPIFLAIWQVISAI, VAIGYLLAACTGILVGGVLGM, AIFVIFITAIWPIIINTAVGI, VPYVFAGLRIAVGLAWLAIVA, and IILAIFYVGLVGLSLDRLVAW. An ABC transmembrane type-1 domain is found at 84-267; it reads ILISLQRVAI…LVGLSLDRLV (184 aa).

This sequence belongs to the binding-protein-dependent transport system permease family. CysTW subfamily. The complex is composed of two ATP-binding proteins (NrtC and NrtD), two transmembrane proteins (NrtB) and a solute-binding protein (NrtA).

Its subcellular location is the cell inner membrane. Part of the ABC transporter complex NrtABCD involved in nitrate uptake. The complex is probably also involved in nitrite transport. Probably responsible for the translocation of the substrate across the membrane. This Synechococcus elongatus (strain ATCC 33912 / PCC 7942 / FACHB-805) (Anacystis nidulans R2) protein is Nitrate import permease protein NrtB.